The chain runs to 534 residues: CTP synthase (534 aa).

An amidoligase domain region spans residues Met-1–Leu-267. Ser-13 serves as a coordination point for CTP. Residue Ser-13 coordinates UTP. Ser-14–Ile-19 provides a ligand contact to ATP. Tyr-54 is an L-glutamine binding site. Asp-71 serves as a coordination point for ATP. 2 residues coordinate Mg(2+): Asp-71 and Glu-141. CTP-binding positions include Asp-148–Glu-150, Lys-188–Gln-193, and Lys-224. UTP-binding positions include Lys-188–Gln-193 and Lys-224. The Glutamine amidotransferase type-1 domain occupies Lys-292–Lys-534. Gly-354 is an L-glutamine binding site. Cys-381 serves as the catalytic Nucleophile; for glutamine hydrolysis. L-glutamine is bound by residues Leu-382–Gln-385, Glu-405, and Arg-463. Residues His-508 and Glu-510 contribute to the active site.

This sequence belongs to the CTP synthase family. In terms of assembly, homotetramer.

The enzyme catalyses UTP + L-glutamine + ATP + H2O = CTP + L-glutamate + ADP + phosphate + 2 H(+). The catalysed reaction is L-glutamine + H2O = L-glutamate + NH4(+). It carries out the reaction UTP + NH4(+) + ATP = CTP + ADP + phosphate + 2 H(+). Its pathway is pyrimidine metabolism; CTP biosynthesis via de novo pathway; CTP from UDP: step 2/2. Its activity is regulated as follows. Allosterically activated by GTP, when glutamine is the substrate; GTP has no effect on the reaction when ammonia is the substrate. The allosteric effector GTP functions by stabilizing the protein conformation that binds the tetrahedral intermediate(s) formed during glutamine hydrolysis. Inhibited by the product CTP, via allosteric rather than competitive inhibition. In terms of biological role, catalyzes the ATP-dependent amination of UTP to CTP with either L-glutamine or ammonia as the source of nitrogen. Regulates intracellular CTP levels through interactions with the four ribonucleotide triphosphates. In Streptococcus thermophilus (strain CNRZ 1066), this protein is CTP synthase.